Consider the following 350-residue polypeptide: Induced myeloid leukemia cell differentiation protein Mcl-1 homolog (350 aa).

A Glycyl lysine isopeptide (Lys-Gly) (interchain with G-Cter in ubiquitin) cross-link involves residue K5. Positions 23–95 are disordered; sequence AGSGGASSSG…GPNVSATPPR (73 aa). The segment covering 31 to 41 has biased composition (low complexity); that stretch reads SGGRLLASGRE. Gly residues predominate over residues 50–61; it reads GGEAGAVIGGSA. Positions 104–175 are PEST-like; sequence RASPPEEMEG…PAEEEEDELY (72 aa). Position 121 is a phosphoserine (S121). A Glycyl lysine isopeptide (Lys-Gly) (interchain with G-Cter in ubiquitin) cross-link involves residue K136. The tract at residues 150–169 is disordered; that stretch reads ASSGPGMDGSLPSTPPPAEE. At S159 the chain carries Phosphoserine; by GSK3-alpha and GSK3-beta. S162 is modified (phosphoserine). T163 bears the Phosphothreonine mark. Residues K194 and K197 each participate in a glycyl lysine isopeptide (Lys-Gly) (interchain with G-Cter in ubiquitin) cross-link. The BH3 motif lies at 209–223; the sequence is ALETLQRVGDGVQRN. The BH1 signature appears at 252 to 272; sequence HVFSDGVTNWGRIVTLISFGA. The BH2 motif lies at 304 to 319; sequence DWLVKQRGWDGFVEFF. Residues 327 to 349 traverse the membrane as a helical segment; sequence GIRNVLLAFAGVAGVGAGLAYLI.

It belongs to the Bcl-2 family. In terms of assembly, interacts with HIF3A (via C-terminus domain). Interacts with BOK, BIK, BAX, BAK1, and TPT1. Interacts with unphosphorylated BAD. Interacts with BMF, BBC3 and PMAIP1. Interacts with BOP. Interacts with BCL2L11; may sequester BCL2L11 to prevent its pro-apoptotic activity. Interacts with GIMAP5 and HSPA8/HSC70; the interaction between HSPA8 and MCL1 is impaired in the absence of GIMAP5. Post-translationally, cleaved by CASP3 during apoptosis, yielding a pro-apoptotic C-terminal fragment. In terms of processing, rapidly degraded in the absence of phosphorylation in the PEST region. Phosphorylated on Ser-159, by GSK3, in response to IL3/interleukin-3 withdrawal. Phosphorylation at Ser-159 induces ubiquitination and proteasomal degradation, abrogating the anti-apoptotic activity. Treatment with taxol or okadaic acid induces phosphorylation on additional sites. Post-translationally, ubiquitinated. Ubiquitination is induced by phosphorylation at Ser-159. Deubiquitinated by USP20; leading to increased stability. As to expression, detected in peripheral blood mononuclear cells and bone marrow.

It localises to the membrane. The protein localises to the cytoplasm. Its subcellular location is the mitochondrion. It is found in the nucleus. The protein resides in the nucleoplasm. Functionally, involved in the regulation of apoptosis versus cell survival, and in the maintenance of viability but not of proliferation. Mediates its effects by interactions with a number of other regulators of apoptosis. The chain is Induced myeloid leukemia cell differentiation protein Mcl-1 homolog (MCL1) from Canis lupus familiaris (Dog).